Here is a 132-residue protein sequence, read N- to C-terminus: Small ribosomal subunit protein uS8 (132 aa).

This sequence belongs to the universal ribosomal protein uS8 family. In terms of assembly, part of the 30S ribosomal subunit. Contacts proteins S5 and S12.

One of the primary rRNA binding proteins, it binds directly to 16S rRNA central domain where it helps coordinate assembly of the platform of the 30S subunit. This Bartonella henselae (strain ATCC 49882 / DSM 28221 / CCUG 30454 / Houston 1) (Rochalimaea henselae) protein is Small ribosomal subunit protein uS8.